The chain runs to 366 residues: Histidinol-phosphate aminotransferase (366 aa).

The residue at position 228 (Lys-228) is an N6-(pyridoxal phosphate)lysine.

Belongs to the class-II pyridoxal-phosphate-dependent aminotransferase family. Histidinol-phosphate aminotransferase subfamily. Homodimer. Requires pyridoxal 5'-phosphate as cofactor.

It catalyses the reaction L-histidinol phosphate + 2-oxoglutarate = 3-(imidazol-4-yl)-2-oxopropyl phosphate + L-glutamate. The protein operates within amino-acid biosynthesis; L-histidine biosynthesis; L-histidine from 5-phospho-alpha-D-ribose 1-diphosphate: step 7/9. This chain is Histidinol-phosphate aminotransferase, found in Corynebacterium glutamicum (strain R).